A 157-amino-acid polypeptide reads, in one-letter code: Glutaredoxin-2, mitochondrial (157 aa).

The transit peptide at 1–19 (MSWYRAASVGRRLVASGRI) directs the protein to the mitochondrion. In terms of domain architecture, Glutaredoxin spans 50–150 (VNQIQETISN…PLVHQCYLNK (101 aa)). Cys-61 lines the [2Fe-2S] cluster pocket. Residue Lys-67 participates in glutathione binding. The residue at position 70 (Cys-70) is an S-glutathionyl cysteine; alternate. Cysteines 70 and 73 form a disulfide. Gln-102 and Val-114 together coordinate glutathione. A [2Fe-2S] cluster-binding site is contributed by Cys-146.

This sequence belongs to the glutaredoxin family. In terms of assembly, monomer; active form. Homodimer; inactive form. The homodimer is probably linked by 1 2Fe-2S cluster.

It localises to the mitochondrion. It is found in the nucleus. The 2Fe-2S present in the homodimer leads to inactivation of the enzyme. The 2Fe-2S may serve as a redox sensor: the presence of one-electron oxidants or reductants leading to the loss of the 2Fe-2S cluster, subsequent monomerization and activation of the enzyme. Glutathione-dependent oxidoreductase that facilitates the maintenance of mitochondrial redox homeostasis upon induction of apoptosis by oxidative stress. Involved in response to hydrogen peroxide and regulation of apoptosis caused by oxidative stress. Acts as a very efficient catalyst of monothiol reactions because of its high affinity for protein glutathione-mixed disulfides. Can receive electrons not only from glutathione (GSH), but also from thioredoxin reductase supporting both monothiol and dithiol reactions. Efficiently catalyzes both glutathionylation and deglutathionylation of mitochondrial complex I, which in turn regulates the superoxide production by the complex. Overexpression decreases the susceptibility to apoptosis and prevents loss of cardiolipin and cytochrome c release. This chain is Glutaredoxin-2, mitochondrial (Glrx2), found in Rattus norvegicus (Rat).